The following is a 194-amino-acid chain: Coiled-coil domain-containing protein 184 (194 aa).

Positions 39–68 form a coiled coil; that stretch reads GMKELMEHLKAQLQALFEDVRAMRGALDEQ. A disordered region spans residues 101–176; sequence GLGVVGGKGS…LLGGDGPLVE (76 aa). Positions 135 to 145 are enriched in acidic residues; it reads PEDEEEEEEEK.

This Homo sapiens (Human) protein is Coiled-coil domain-containing protein 184 (CCDC184).